We begin with the raw amino-acid sequence, 227 residues long: Cytochrome c oxidase subunit 2 (227 aa).

The Mitochondrial intermembrane segment spans residues 1–14 (MAYPFQLGLQDATS). Residues 15 to 45 (PIMEELLHFHDHTLMIVFLISSLVLYIISLM) traverse the membrane as a helical segment. Residues 46–59 (LTTKLTHTSTMDAQ) are Mitochondrial matrix-facing. A helical transmembrane segment spans residues 60 to 87 (EVETVWTILPAIILILIALPSLRILYMM). Topologically, residues 88–227 (DEINNPSLTV…YFETWSALMV (140 aa)) are mitochondrial intermembrane. Positions 161, 196, 198, 200, 204, and 207 each coordinate Cu cation. Glutamate 198 lines the Mg(2+) pocket. Residue tyrosine 218 is modified to Phosphotyrosine.

The protein belongs to the cytochrome c oxidase subunit 2 family. As to quaternary structure, component of the cytochrome c oxidase (complex IV, CIV), a multisubunit enzyme composed of 14 subunits. The complex is composed of a catalytic core of 3 subunits MT-CO1, MT-CO2 and MT-CO3, encoded in the mitochondrial DNA, and 11 supernumerary subunits COX4I, COX5A, COX5B, COX6A, COX6B, COX6C, COX7A, COX7B, COX7C, COX8 and NDUFA4, which are encoded in the nuclear genome. The complex exists as a monomer or a dimer and forms supercomplexes (SCs) in the inner mitochondrial membrane with NADH-ubiquinone oxidoreductase (complex I, CI) and ubiquinol-cytochrome c oxidoreductase (cytochrome b-c1 complex, complex III, CIII), resulting in different assemblies (supercomplex SCI(1)III(2)IV(1) and megacomplex MCI(2)III(2)IV(2)). Found in a complex with TMEM177, COA6, COX18, COX20, SCO1 and SCO2. Interacts with TMEM177 in a COX20-dependent manner. Interacts with COX20. Interacts with COX16. Cu cation serves as cofactor.

It localises to the mitochondrion inner membrane. The catalysed reaction is 4 Fe(II)-[cytochrome c] + O2 + 8 H(+)(in) = 4 Fe(III)-[cytochrome c] + 2 H2O + 4 H(+)(out). Functionally, component of the cytochrome c oxidase, the last enzyme in the mitochondrial electron transport chain which drives oxidative phosphorylation. The respiratory chain contains 3 multisubunit complexes succinate dehydrogenase (complex II, CII), ubiquinol-cytochrome c oxidoreductase (cytochrome b-c1 complex, complex III, CIII) and cytochrome c oxidase (complex IV, CIV), that cooperate to transfer electrons derived from NADH and succinate to molecular oxygen, creating an electrochemical gradient over the inner membrane that drives transmembrane transport and the ATP synthase. Cytochrome c oxidase is the component of the respiratory chain that catalyzes the reduction of oxygen to water. Electrons originating from reduced cytochrome c in the intermembrane space (IMS) are transferred via the dinuclear copper A center (CU(A)) of subunit 2 and heme A of subunit 1 to the active site in subunit 1, a binuclear center (BNC) formed by heme A3 and copper B (CU(B)). The BNC reduces molecular oxygen to 2 water molecules using 4 electrons from cytochrome c in the IMS and 4 protons from the mitochondrial matrix. The polypeptide is Cytochrome c oxidase subunit 2 (MT-CO2) (Canis mesomelas elongae (Eastern African black-backed jackal)).